We begin with the raw amino-acid sequence, 191 residues long: Large ribosomal subunit protein uL22 (191 aa).

Residues 159 to 168 (VPKGEDDTAQ) are compositionally biased toward basic and acidic residues. The tract at residues 159–191 (VPKGEDDTAQKKKVSQKKLKKQKLKAALSGGAD) is disordered. Residues 169–182 (KKKVSQKKLKKQKL) show a composition bias toward basic residues.

This sequence belongs to the universal ribosomal protein uL22 family.

The protein is Large ribosomal subunit protein uL22 (RPL17) of Suberites domuncula (Sponge).